The chain runs to 152 residues: Large ribosomal subunit protein bL9 (152 aa).

It belongs to the bacterial ribosomal protein bL9 family.

Binds to the 23S rRNA. This is Large ribosomal subunit protein bL9 from Prochlorococcus marinus (strain NATL2A).